Reading from the N-terminus, the 83-residue chain is Cytochrome b559 subunit alpha (83 aa).

The chain crosses the membrane as a helical span at residues 21–35 (VIHSITIPSLFIAGW). Residue H23 coordinates heme.

It belongs to the PsbE/PsbF family. Heterodimer of an alpha subunit and a beta subunit. PSII is composed of 1 copy each of membrane proteins PsbA, PsbB, PsbC, PsbD, PsbE, PsbF, PsbH, PsbI, PsbJ, PsbK, PsbL, PsbM, PsbT, PsbX, PsbY, PsbZ, Psb30/Ycf12, at least 3 peripheral proteins of the oxygen-evolving complex and a large number of cofactors. It forms dimeric complexes. It depends on heme b as a cofactor.

The protein resides in the plastid. It is found in the chloroplast thylakoid membrane. This b-type cytochrome is tightly associated with the reaction center of photosystem II (PSII). PSII is a light-driven water:plastoquinone oxidoreductase that uses light energy to abstract electrons from H(2)O, generating O(2) and a proton gradient subsequently used for ATP formation. It consists of a core antenna complex that captures photons, and an electron transfer chain that converts photonic excitation into a charge separation. The sequence is that of Cytochrome b559 subunit alpha from Psilotum nudum (Whisk fern).